The following is a 232-amino-acid chain: MYYTRITQIERLTDEVATLYFSISLRSYPGQFVMVYVPGCEEIPLSLSSSNSVTVKAVGETTASLINAKEGQYVGVRGAFGSAFTPSKRALIVAGGIGIAPMKYLYEYLMKCGSKVSVVYGERTAKNLFWLDKFDRITVTTEDGSFGLKGTVLDALKLEKLDEYEKIYVCGSEGMLRATYDFLKERDALDKAEFSLERYMRCGIGVCGSCVIENGLRVCADGPVFNASELPW.

Residues 1–86 (MYYTRITQIE…RGAFGSAFTP (86 aa)) form the FAD-binding FR-type domain. [2Fe-2S] cluster-binding residues include Cys-202, Cys-207, Cys-210, and Cys-219.

The protein belongs to the PyrK family. As to quaternary structure, heterotetramer of 2 PyrK and 2 PyrD type B subunits. [2Fe-2S] cluster is required as a cofactor. The cofactor is FAD.

The protein operates within pyrimidine metabolism; UMP biosynthesis via de novo pathway; orotate from (S)-dihydroorotate (NAD(+) route): step 1/1. Its function is as follows. Responsible for channeling the electrons from the oxidation of dihydroorotate from the FMN redox center in the PyrD type B subunit to the ultimate electron acceptor NAD(+). The chain is Probable dihydroorotate dehydrogenase B (NAD(+)), electron transfer subunit from Archaeoglobus fulgidus (strain ATCC 49558 / DSM 4304 / JCM 9628 / NBRC 100126 / VC-16).